Here is a 104-residue protein sequence, read N- to C-terminus: UPF0125 protein PSPTO_4512 (104 aa).

It belongs to the UPF0125 (RnfH) family.

The chain is UPF0125 protein PSPTO_4512 from Pseudomonas syringae pv. tomato (strain ATCC BAA-871 / DC3000).